Consider the following 177-residue polypeptide: ATP-dependent protease subunit HslV (177 aa).

The active site involves T6. Residues G161, C164, and T167 each coordinate Na(+).

This sequence belongs to the peptidase T1B family. HslV subfamily. In terms of assembly, a double ring-shaped homohexamer of HslV is capped on each side by a ring-shaped HslU homohexamer. The assembly of the HslU/HslV complex is dependent on binding of ATP.

It is found in the cytoplasm. It carries out the reaction ATP-dependent cleavage of peptide bonds with broad specificity.. Allosterically activated by HslU binding. Functionally, protease subunit of a proteasome-like degradation complex believed to be a general protein degrading machinery. The sequence is that of ATP-dependent protease subunit HslV from Petrotoga mobilis (strain DSM 10674 / SJ95).